We begin with the raw amino-acid sequence, 580 residues long: uncharacterized protein (580 aa).

Disordered stretches follow at residues 161-241, 256-281, 325-345, 472-495, and 544-564; these read SFSP…SVND, LGSL…SFSD, NVSH…QLLK, PRDT…DNSD, and SAVL…KEVR. The segment covering 192-203 has biased composition (low complexity); that stretch reads SNSNSSDTSTDD. Composition is skewed to polar residues over residues 223–241 and 256–269; these read THSS…SVND and LGSL…TAQK. Residues 326-341 are compositionally biased toward basic and acidic residues; it reads VSHEEKSHSVQDDKSK. Over residues 481-495 the composition is skewed to polar residues; the sequence is PNLSQSGNINSDNSD.

This is an uncharacterized protein from Schizosaccharomyces pombe (strain 972 / ATCC 24843) (Fission yeast).